A 176-amino-acid polypeptide reads, in one-letter code: Crossover junction endodeoxyribonuclease RuvC (176 aa).

Catalysis depends on residues D7, E67, and D139. D7, E67, and D139 together coordinate Mg(2+).

This sequence belongs to the RuvC family. Homodimer which binds Holliday junction (HJ) DNA. The HJ becomes 2-fold symmetrical on binding to RuvC with unstacked arms; it has a different conformation from HJ DNA in complex with RuvA. In the full resolvosome a probable DNA-RuvA(4)-RuvB(12)-RuvC(2) complex forms which resolves the HJ. It depends on Mg(2+) as a cofactor.

The protein resides in the cytoplasm. It carries out the reaction Endonucleolytic cleavage at a junction such as a reciprocal single-stranded crossover between two homologous DNA duplexes (Holliday junction).. The RuvA-RuvB-RuvC complex processes Holliday junction (HJ) DNA during genetic recombination and DNA repair. Endonuclease that resolves HJ intermediates. Cleaves cruciform DNA by making single-stranded nicks across the HJ at symmetrical positions within the homologous arms, yielding a 5'-phosphate and a 3'-hydroxyl group; requires a central core of homology in the junction. The consensus cleavage sequence is 5'-(A/T)TT(C/G)-3'. Cleavage occurs on the 3'-side of the TT dinucleotide at the point of strand exchange. HJ branch migration catalyzed by RuvA-RuvB allows RuvC to scan DNA until it finds its consensus sequence, where it cleaves and resolves the cruciform DNA. The sequence is that of Crossover junction endodeoxyribonuclease RuvC from Pelobacter propionicus (strain DSM 2379 / NBRC 103807 / OttBd1).